Reading from the N-terminus, the 221-residue chain is Large ribosomal subunit protein uL4 (221 aa).

Positions 46 to 74 are disordered; sequence AGTASTKTRSEVSGGGRKPWPQKHTGRAR.

This sequence belongs to the universal ribosomal protein uL4 family. In terms of assembly, part of the 50S ribosomal subunit.

Functionally, one of the primary rRNA binding proteins, this protein initially binds near the 5'-end of the 23S rRNA. It is important during the early stages of 50S assembly. It makes multiple contacts with different domains of the 23S rRNA in the assembled 50S subunit and ribosome. Forms part of the polypeptide exit tunnel. The protein is Large ribosomal subunit protein uL4 of Petrotoga mobilis (strain DSM 10674 / SJ95).